Here is a 170-residue protein sequence, read N- to C-terminus: Thialysine N-epsilon-acetyltransferase (170 aa).

The N-acetyltransferase domain occupies 4–166 (VLIREAKEGD…FRFEGEAMRE (163 aa)). A substrate-binding site is contributed by 27 to 28 (YE). Residue Lys-29 is modified to N6-acetyllysine. Glu-92 serves as a coordination point for substrate. Acetyl-CoA-binding positions include 94–96 (IYV), 102–107 (GQGIGS), 133–135 (NKK), and Tyr-140. Catalysis depends on Tyr-140, which acts as the Proton donor. Glu-152 provides a ligand contact to substrate.

The protein belongs to the acetyltransferase family. As to quaternary structure, homodimer.

The protein localises to the cytoplasm. It catalyses the reaction S-(2-aminoethyl)-L-cysteine + acetyl-CoA = S-(2-acetamidoethyl)-L-cysteine + CoA + H(+). The catalysed reaction is an alkane-alpha,omega-diamine + acetyl-CoA = an N-acetylalkane-alpha,omega-diamine + CoA + H(+). In terms of biological role, catalyzes the N-acetylation of the amino acid thialysine (S-(2-aminoethyl)-L-cysteine), a L-lysine analog with the 4-methylene group substituted with a sulfur. May also catalyze acetylation of polyamines, such as norspermidine, spermidine or spermine. However, ability to acetylate polyamines is weak, suggesting that it does not act as a diamine acetyltransferase in vivo. The protein is Thialysine N-epsilon-acetyltransferase of Sus scrofa (Pig).